Consider the following 361-residue polypeptide: Large ribosomal subunit protein mL45 (361 aa).

The protein belongs to the mitochondrion-specific ribosomal protein mL45 family.

It localises to the mitochondrion. In Caenorhabditis briggsae, this protein is Large ribosomal subunit protein mL45 (mrpl-45).